The primary structure comprises 273 residues: Aspartate/glutamate leucyltransferase (273 aa).

Belongs to the R-transferase family. Bpt subfamily.

It is found in the cytoplasm. The enzyme catalyses N-terminal L-glutamyl-[protein] + L-leucyl-tRNA(Leu) = N-terminal L-leucyl-L-glutamyl-[protein] + tRNA(Leu) + H(+). It carries out the reaction N-terminal L-aspartyl-[protein] + L-leucyl-tRNA(Leu) = N-terminal L-leucyl-L-aspartyl-[protein] + tRNA(Leu) + H(+). Functionally, functions in the N-end rule pathway of protein degradation where it conjugates Leu from its aminoacyl-tRNA to the N-termini of proteins containing an N-terminal aspartate or glutamate. The polypeptide is Aspartate/glutamate leucyltransferase (Ruegeria pomeroyi (strain ATCC 700808 / DSM 15171 / DSS-3) (Silicibacter pomeroyi)).